We begin with the raw amino-acid sequence, 292 residues long: Probable deoxyhypusine synthase (292 aa).

The Nucleophile role is filled by Lys-267.

It belongs to the deoxyhypusine synthase family. Requires NAD(+) as cofactor.

The enzyme catalyses [eIF5A protein]-L-lysine + spermidine = [eIF5A protein]-deoxyhypusine + propane-1,3-diamine. The protein operates within protein modification; eIF5A hypusination. Its function is as follows. Catalyzes the NAD-dependent oxidative cleavage of spermidine and the subsequent transfer of the butylamine moiety of spermidine to the epsilon-amino group of a specific lysine residue of the eIF-5A precursor protein to form the intermediate deoxyhypusine residue. The sequence is that of Probable deoxyhypusine synthase (dys) from Pyrobaculum aerophilum (strain ATCC 51768 / DSM 7523 / JCM 9630 / CIP 104966 / NBRC 100827 / IM2).